Here is a 300-residue protein sequence, read N- to C-terminus: Acetylglutamate kinase (300 aa).

Substrate-binding positions include 69 to 70 (GG), Arg91, and Asn197.

This sequence belongs to the acetylglutamate kinase family. ArgB subfamily.

It is found in the cytoplasm. It catalyses the reaction N-acetyl-L-glutamate + ATP = N-acetyl-L-glutamyl 5-phosphate + ADP. It functions in the pathway amino-acid biosynthesis; L-arginine biosynthesis; N(2)-acetyl-L-ornithine from L-glutamate: step 2/4. Its function is as follows. Catalyzes the ATP-dependent phosphorylation of N-acetyl-L-glutamate. This chain is Acetylglutamate kinase, found in Kineococcus radiotolerans (strain ATCC BAA-149 / DSM 14245 / SRS30216).